The sequence spans 171 residues: uncharacterized protein (171 aa).

This is an uncharacterized protein from Aedes vexans (Inland floodwater mosquito).